Consider the following 204-residue polypeptide: Holliday junction branch migration complex subunit RuvA (204 aa).

The tract at residues 1–64 (MISRMKGIIL…EDAQLLYGFH (64 aa)) is domain I. The domain II stretch occupies residues 65–143 (HPKERAMFSE…NLNKNLFKST (79 aa)). Residues 144-155 (ADHMLSSVSTDL) are flexible linker. The tract at residues 156–204 (SAKSAEAEAISALISLGYKPQEAAQLIKNIAQPDLDSQALIKHALRSTL) is domain III.

This sequence belongs to the RuvA family. In terms of assembly, homotetramer. Forms an RuvA(8)-RuvB(12)-Holliday junction (HJ) complex. HJ DNA is sandwiched between 2 RuvA tetramers; dsDNA enters through RuvA and exits via RuvB. An RuvB hexamer assembles on each DNA strand where it exits the tetramer. Each RuvB hexamer is contacted by two RuvA subunits (via domain III) on 2 adjacent RuvB subunits; this complex drives branch migration. In the full resolvosome a probable DNA-RuvA(4)-RuvB(12)-RuvC(2) complex forms which resolves the HJ.

It localises to the cytoplasm. In terms of biological role, the RuvA-RuvB-RuvC complex processes Holliday junction (HJ) DNA during genetic recombination and DNA repair, while the RuvA-RuvB complex plays an important role in the rescue of blocked DNA replication forks via replication fork reversal (RFR). RuvA specifically binds to HJ cruciform DNA, conferring on it an open structure. The RuvB hexamer acts as an ATP-dependent pump, pulling dsDNA into and through the RuvAB complex. HJ branch migration allows RuvC to scan DNA until it finds its consensus sequence, where it cleaves and resolves the cruciform DNA. This Hamiltonella defensa subsp. Acyrthosiphon pisum (strain 5AT) protein is Holliday junction branch migration complex subunit RuvA.